We begin with the raw amino-acid sequence, 424 residues long: Folate-like transporter 2 (424 aa).

N-linked (GlcNAc...) asparagine glycosylation occurs at asparagine 35. 6 consecutive transmembrane segments (helical) span residues 48 to 68, 71 to 91, 99 to 119, 136 to 156, 164 to 184, and 233 to 253; these read IWTY…DVFL, PLLV…VFGK, LEVF…YIYV, ALLV…GLNW, IISL…PGVE, and PLIL…YQVT. Asparagine 254 carries an N-linked (GlcNAc...) asparagine glycan. The next 4 membrane-spanning stretches (helical) occupy residues 299–319, 324–344, 361–381, and 392–412; these read WGDL…FWMS, IVVL…TTTI, LFGI…AVVI, and FVVY…IFGI.

Belongs to the reduced folate carrier (RFC) transporter (TC 2.A.48) family.

Its subcellular location is the membrane. Unlike folt-1, does not appear to act as a folate transporter. This Caenorhabditis elegans protein is Folate-like transporter 2 (folt-2).